The sequence spans 536 residues: MSDIGVFNAAVGADRAGLRNLKRVFWNLEAPGLYEQALQRGEAQLAVGGALVAETGIHTGRSPKDKFVVRDAETEAQVWWDNNGAISPEQFDRLHADFIAHAEGRELFAQDLYGGAEPAHRVRARVFTEFAWHSLFIRNLLIRPERDELATYEPDLTIIDLPSFKADPARHGVRSETMIACDFTRRIMLIGGTSYAGEMKKSVFTYLNYILPQAGVMPMHCSANVGGAGDSALFFGLSGTGKTTLSSDPARALLGDDEHGWSPKGIFNFEGGCYAKTIRLSREAEPEIYATTERFGTVMENVVIDPVTRLPDFDDASRTENTRCAYPLPFIPNASPTGRAGHPKNIVMLTCDAFGVLPPIAKLTGAEAMYHFLSGYTAKVAGTEKGLKGPEATFSTCFGAPFMPRHPSVYGNLLRDLIARHHVDCWLVNTGWTGGGVGTGRRMPIRVTRRLLTAALDGSLAKADFRRDPYFGFAVPTSVPGVEPHILYPVKTWQDKAAFAETAKKLVEMFQANFKRFEAHVDADVRAAEPTMSIAA.

Residues arginine 61, tyrosine 195, and lysine 201 each contribute to the substrate site. ATP contacts are provided by residues lysine 201, histidine 220, and 236-244 (GLSGTGKTT). The Mn(2+) site is built by lysine 201 and histidine 220. Position 257 (aspartate 257) interacts with Mn(2+). Positions 285, 323, and 448 each coordinate ATP. Arginine 323 is a binding site for substrate.

It belongs to the phosphoenolpyruvate carboxykinase (ATP) family. Mn(2+) is required as a cofactor.

The protein localises to the cytoplasm. It carries out the reaction oxaloacetate + ATP = phosphoenolpyruvate + ADP + CO2. The protein operates within carbohydrate biosynthesis; gluconeogenesis. Involved in the gluconeogenesis. Catalyzes the conversion of oxaloacetate (OAA) to phosphoenolpyruvate (PEP) through direct phosphoryl transfer between the nucleoside triphosphate and OAA. In Methylobacterium nodulans (strain LMG 21967 / CNCM I-2342 / ORS 2060), this protein is Phosphoenolpyruvate carboxykinase (ATP).